The chain runs to 89 residues: MAVVPLGEVRNRLSEYVAEVELTHERITITRHGHPAAVLISADDLASIEETLEVLRTPGASEAIREGLADVAAGRFVSNDEIRNRYTAR.

This sequence belongs to the phD/YefM antitoxin family. As to quaternary structure, interacts with toxin RelE, which neutralizes its toxicity. Also interacts with toxins RelG and RelK in vitro, in M.smegmatis coexpression with non-cognate toxins neutralizes the toxicity of RelG while increasing the toxicity of RelK.

In terms of biological role, antitoxin component of a type II toxin-antitoxin (TA) system. Upon expression in M.smegmatis neutralizes the effect of toxin RelE. Functionally, induces its own promoter, in combination with RelE represses its own promoter. Binds DNA in complex with toxin RelE but not alone. The chain is Antitoxin RelB (relB) from Mycobacterium tuberculosis (strain ATCC 25618 / H37Rv).